We begin with the raw amino-acid sequence, 195 residues long: Probable DNA-directed RNA polymerase subunit delta (195 aa).

One can recognise an HTH HARE-type domain in the interval 14–83; that stretch reads LSMIEVARAI…GDNKWGLRSW (70 aa). Composition is skewed to acidic residues over residues 120–138 and 145–195; these read DSDAIDYNADDPEDEDAYE and YDDE…TSEE. The tract at residues 120–195 is disordered; the sequence is DSDAIDYNAD…SDDDAETSEE (76 aa).

This sequence belongs to the RpoE family. As to quaternary structure, RNAP is composed of a core of 2 alpha, a beta and a beta' subunits. The core is associated with a delta subunit and one of several sigma factors.

Functionally, participates in both the initiation and recycling phases of transcription. In the presence of the delta subunit, RNAP displays an increased specificity of transcription, a decreased affinity for nucleic acids, and an increased efficiency of RNA synthesis because of enhanced recycling. The protein is Probable DNA-directed RNA polymerase subunit delta of Streptococcus pneumoniae serotype 2 (strain D39 / NCTC 7466).